The following is a 407-amino-acid chain: tRNA (uracil(54)-C(5))-methyltransferase (407 aa).

The [4Fe-4S] cluster site is built by C61, C67, C70, and C137. S-adenosyl-L-methionine-binding positions include Q253, Y279, T284, 300–301, D327, and D341; that span reads DS. C368 (nucleophile) is an active-site residue. E400 acts as the Proton acceptor in catalysis.

The protein belongs to the class I-like SAM-binding methyltransferase superfamily. RNA M5U methyltransferase family.

The enzyme catalyses uridine(54) in tRNA + S-adenosyl-L-methionine = 5-methyluridine(54) in tRNA + S-adenosyl-L-homocysteine + H(+). In terms of biological role, catalyzes the formation of 5-methyl-uridine at position 54 (m5U54) in tRNA. This Pyrococcus horikoshii (strain ATCC 700860 / DSM 12428 / JCM 9974 / NBRC 100139 / OT-3) protein is tRNA (uracil(54)-C(5))-methyltransferase.